We begin with the raw amino-acid sequence, 425 residues long: Sensor histidine kinase NarS (425 aa).

The next 6 membrane-spanning stretches (helical) occupy residues 42 to 62 (IASV…VVGT), 71 to 91 (IVLI…AYSA), 107 to 127 (LEPF…QLLS), 130 to 150 (GIYP…DVST), 155 to 175 (VVLA…PVML), and 181 to 201 (PETI…LMVV). The Histidine kinase domain maps to 224–425 (QTMTASEVLQ…HVCVELPLKR (202 aa)). The residue at position 241 (His-241) is a Phosphohistidine; by autocatalysis.

In terms of processing, autophosphorylated on His-241.

The protein resides in the cell membrane. The enzyme catalyses ATP + protein L-histidine = ADP + protein N-phospho-L-histidine.. Functionally, member of the two-component regulatory system NarS/NarL involved in gene expression during aerobic nitrate metabolism. Plays therefore a crucial role in anaerobic survival of mycobacteria in host. Functions as a sensor protein kinase which is autophosphorylated at a histidine residue and transfers its phosphate group to the conserved aspartic acid residue in the regulatory domain of NarL. In turn, NarL binds to the upstream promoter regions of target genes to regulate their expression during aerobic nitrate metabolism. In Mycobacterium tuberculosis (strain ATCC 25618 / H37Rv), this protein is Sensor histidine kinase NarS.